Consider the following 469-residue polypeptide: MKRSTVVIRPSARALSRQASSQSFLLARSSALTSRQRRLYSTHPPNARLNLPIDYATTPLLAHTSQAALSNPELPASVRNGTTKRMNLFQAINDALSTALAEDESVLIFGEDVAFGGVFRCTTKLAETYGGDRVFNTPLTEQGIMGFAIGAAAEGMRPVAEIQFADYVFPAFDQLVNEAAKFRYRDGAGGRSAGGLTVRMPCGGVGHGALYHSQSPEALFTHIPGLKVIIPRGPVQAKGLLLAAIRSNDPCVVMEPKILYRAAVEQVPTTAYELPLGKAEILKEGKDVTVVSYGQPLYKCMAALKAAEQDFGVSVELIDLRTIYPWDKETVFNSVRKTGRCVVVHEAMVNAGVGAEVAAAIQEDPETFVRLEAPVARIAGWSIPTPLVFEQFNLPDVTSKCYLTLGLADVYADGMPRDIRRHQKGDEFLRDLSMNSGILKQSMLHSSRRGVDWLMGIVLDDIILSVFLV.

A mitochondrion-targeting transit peptide spans 1 to 40 (MKRSTVVIRPSARALSRQASSQSFLLARSSALTSRQRRLY). Y167 serves as a coordination point for thiamine diphosphate. G194, L196, and T197 together coordinate K(+).

In terms of assembly, heterotetramer of 2 alpha and 2 beta chains. It depends on thiamine diphosphate as a cofactor.

The protein resides in the mitochondrion matrix. The catalysed reaction is N(6)-[(R)-lipoyl]-L-lysyl-[protein] + 3-methyl-2-oxobutanoate + H(+) = N(6)-[(R)-S(8)-2-methylpropanoyldihydrolipoyl]-L-lysyl-[protein] + CO2. The branched-chain alpha-keto dehydrogenase complex catalyzes the overall conversion of alpha-keto acids to acyl-CoA and CO(2). It contains multiple copies of three enzymatic components: branched-chain alpha-keto acid decarboxylase (E1), lipoamide acyltransferase (E2) and lipoamide dehydrogenase (E3). The protein is 2-oxoisovalerate dehydrogenase subunit beta, mitochondrial of Chaetomium thermophilum (strain DSM 1495 / CBS 144.50 / IMI 039719) (Thermochaetoides thermophila).